Reading from the N-terminus, the 430-residue chain is Glutamate-1-semialdehyde 2,1-aminomutase (430 aa).

Lys-268 bears the N6-(pyridoxal phosphate)lysine mark.

This sequence belongs to the class-III pyridoxal-phosphate-dependent aminotransferase family. HemL subfamily. As to quaternary structure, homodimer. The cofactor is pyridoxal 5'-phosphate.

The protein localises to the cytoplasm. It catalyses the reaction (S)-4-amino-5-oxopentanoate = 5-aminolevulinate. It functions in the pathway porphyrin-containing compound metabolism; protoporphyrin-IX biosynthesis; 5-aminolevulinate from L-glutamyl-tRNA(Glu): step 2/2. The polypeptide is Glutamate-1-semialdehyde 2,1-aminomutase (hemL) (Bacillus subtilis (strain 168)).